The sequence spans 438 residues: Methylenetetrahydrofolate--tRNA-(uracil-5-)-methyltransferase TrmFO 2 (438 aa).

Position 9 to 14 (9 to 14 (GAGLAG)) interacts with FAD.

Belongs to the MnmG family. TrmFO subfamily. FAD is required as a cofactor.

It is found in the cytoplasm. It catalyses the reaction uridine(54) in tRNA + (6R)-5,10-methylene-5,6,7,8-tetrahydrofolate + NADH + H(+) = 5-methyluridine(54) in tRNA + (6S)-5,6,7,8-tetrahydrofolate + NAD(+). The enzyme catalyses uridine(54) in tRNA + (6R)-5,10-methylene-5,6,7,8-tetrahydrofolate + NADPH + H(+) = 5-methyluridine(54) in tRNA + (6S)-5,6,7,8-tetrahydrofolate + NADP(+). In terms of biological role, catalyzes the folate-dependent formation of 5-methyl-uridine at position 54 (M-5-U54) in all tRNAs. The protein is Methylenetetrahydrofolate--tRNA-(uracil-5-)-methyltransferase TrmFO 2 of Mycoplasma mycoides subsp. mycoides SC (strain CCUG 32753 / NCTC 10114 / PG1).